Reading from the N-terminus, the 323-residue chain is Aspartate carbamoyltransferase catalytic subunit (323 aa).

Residues arginine 71 and threonine 72 each contribute to the carbamoyl phosphate site. Lysine 99 is a binding site for L-aspartate. Positions 121, 151, and 154 each coordinate carbamoyl phosphate. L-aspartate-binding residues include arginine 184 and arginine 239. 2 residues coordinate carbamoyl phosphate: glycine 280 and proline 281.

Belongs to the aspartate/ornithine carbamoyltransferase superfamily. ATCase family. Heterododecamer (2C3:3R2) of six catalytic PyrB chains organized as two trimers (C3), and six regulatory PyrI chains organized as three dimers (R2).

It catalyses the reaction carbamoyl phosphate + L-aspartate = N-carbamoyl-L-aspartate + phosphate + H(+). It functions in the pathway pyrimidine metabolism; UMP biosynthesis via de novo pathway; (S)-dihydroorotate from bicarbonate: step 2/3. Its function is as follows. Catalyzes the condensation of carbamoyl phosphate and aspartate to form carbamoyl aspartate and inorganic phosphate, the committed step in the de novo pyrimidine nucleotide biosynthesis pathway. This Cupriavidus taiwanensis (strain DSM 17343 / BCRC 17206 / CCUG 44338 / CIP 107171 / LMG 19424 / R1) (Ralstonia taiwanensis (strain LMG 19424)) protein is Aspartate carbamoyltransferase catalytic subunit.